The chain runs to 114 residues: UPF0102 protein Amet_2739 (114 aa).

It belongs to the UPF0102 family.

The protein is UPF0102 protein Amet_2739 of Alkaliphilus metalliredigens (strain QYMF).